The primary structure comprises 1021 residues: Putative 115 kDa protein in type-1 retrotransposable element R1DM (1021 aa).

The Reverse transcriptase domain maps to 479–741 (RCIRLGYFPA…RSCRYLGITV (263 aa)). Positions 955–971 (CACGDPYEDWMHILCAC) are gag-like cysteine motif.

This is Putative 115 kDa protein in type-1 retrotransposable element R1DM (R1A1-element\ORF2) from Drosophila melanogaster (Fruit fly).